A 182-amino-acid chain; its full sequence is UPF0301 protein CHU_1773 (182 aa).

Belongs to the UPF0301 (AlgH) family.

The protein is UPF0301 protein CHU_1773 of Cytophaga hutchinsonii (strain ATCC 33406 / DSM 1761 / CIP 103989 / NBRC 15051 / NCIMB 9469 / D465).